A 391-amino-acid polypeptide reads, in one-letter code: Large ribosomal subunit protein uL3 (391 aa).

The segment covering 1 to 10 (MSHRKFEAPR) has biased composition (basic and acidic residues). The segment at 1-41 (MSHRKFEAPRHGSLGFRPRRRTRHHRGRCRSFPKDDPSKKP) is disordered. Residues 17-31 (RPRRRTRHHRGRCRS) are compositionally biased toward basic residues.

The protein belongs to the universal ribosomal protein uL3 family.

It localises to the cytoplasm. The L3 protein is a component of the large subunit of cytoplasmic ribosomes. This Tetrahymena thermophila protein is Large ribosomal subunit protein uL3 (RPL3).